The sequence spans 98 residues: Beta-elicitin MGM-beta (98 aa).

Cystine bridges form between C3–C71, C27–C56, and C51–C95.

This sequence belongs to the elicitin family.

It is found in the secreted. Functionally, induces local and distal defense responses (incompatible hypersensitive reaction) in plants from the solanaceae and cruciferae families. Elicits leaf necrosis and causes the accumulation of pathogenesis-related proteins. Might interact with the lipidic molecules of the plasma membrane. The polypeptide is Beta-elicitin MGM-beta (Phytophthora megasperma (Potato pink rot fungus)).